We begin with the raw amino-acid sequence, 230 residues long: Demethylmenaquinone methyltransferase (230 aa).

S-adenosyl-L-methionine is bound by residues Thr57, Asp77, 101–102 (DI), and Ser118.

It belongs to the class I-like SAM-binding methyltransferase superfamily. MenG/UbiE family.

It catalyses the reaction a 2-demethylmenaquinol + S-adenosyl-L-methionine = a menaquinol + S-adenosyl-L-homocysteine + H(+). The protein operates within quinol/quinone metabolism; menaquinone biosynthesis; menaquinol from 1,4-dihydroxy-2-naphthoate: step 2/2. Methyltransferase required for the conversion of demethylmenaquinol (DMKH2) to menaquinol (MKH2). The protein is Demethylmenaquinone methyltransferase of Chlamydia caviae (strain ATCC VR-813 / DSM 19441 / 03DC25 / GPIC) (Chlamydophila caviae).